A 140-amino-acid polypeptide reads, in one-letter code: uncharacterized protein (140 aa).

3 helical membrane passes run 42–62 (AFLFNFLPLLLLLAFLDIFAS), 65–85 (ASFLAAVLIKILVKSVFSALG), and 96–116 (RASDCLAALEFFDIFLAMLCF).

The protein resides in the membrane. This is an uncharacterized protein from Saccharomyces cerevisiae (strain ATCC 204508 / S288c) (Baker's yeast).